The sequence spans 363 residues: Ribosomal RNA small subunit methyltransferase H (363 aa).

S-adenosyl-L-methionine is bound by residues 55 to 57 (GGH), Asp-75, Asp-122, and Gln-129.

This sequence belongs to the methyltransferase superfamily. RsmH family.

The protein localises to the cytoplasm. It catalyses the reaction cytidine(1402) in 16S rRNA + S-adenosyl-L-methionine = N(4)-methylcytidine(1402) in 16S rRNA + S-adenosyl-L-homocysteine + H(+). Functionally, specifically methylates the N4 position of cytidine in position 1402 (C1402) of 16S rRNA. The protein is Ribosomal RNA small subunit methyltransferase H of Bordetella petrii (strain ATCC BAA-461 / DSM 12804 / CCUG 43448).